We begin with the raw amino-acid sequence, 506 residues long: Photosystem II CP47 reaction center protein (506 aa).

Transmembrane regions (helical) follow at residues 21–36, 101–115, 140–156, 203–218, 237–252, and 457–472; these read SVHIMHTALVAGWAGS, ILFSGLCFLAAIWHW, GIHLFLSGLGCFGFGAF, IAAGTLGILAGLFHLS, VLSSSIAAVFFAAFVV, and SFALLFFFGHIWHGAR.

It belongs to the PsbB/PsbC family. PsbB subfamily. In terms of assembly, PSII is composed of 1 copy each of membrane proteins PsbA, PsbB, PsbC, PsbD, PsbE, PsbF, PsbH, PsbI, PsbJ, PsbK, PsbL, PsbM, PsbT, PsbX, PsbY, PsbZ, Psb30/Ycf12, at least 3 peripheral proteins of the oxygen-evolving complex and a large number of cofactors. It forms dimeric complexes. The cofactor is Binds multiple chlorophylls. PSII binds additional chlorophylls, carotenoids and specific lipids..

The protein localises to the plastid. The protein resides in the chloroplast thylakoid membrane. Functionally, one of the components of the core complex of photosystem II (PSII). It binds chlorophyll and helps catalyze the primary light-induced photochemical processes of PSII. PSII is a light-driven water:plastoquinone oxidoreductase, using light energy to abstract electrons from H(2)O, generating O(2) and a proton gradient subsequently used for ATP formation. In Cucumis sativus (Cucumber), this protein is Photosystem II CP47 reaction center protein.